Reading from the N-terminus, the 155-residue chain is MKINVVAVGKRLPAWIKAGFQSYADRLPRDFDLNLIEIAAFKRSKGADLKKIMLQESQQLIDAVPKESEIIVLDRLGEEVDTPTLAQKLSQWRHENRSISLLIGGPEGLSATCIDKARWVWSLSALTLPHALARVIVAEQIYRAWSIITNHPYHR.

Residues leucine 73, glycine 104, and 123–128 (LSALTL) contribute to the S-adenosyl-L-methionine site.

Belongs to the RNA methyltransferase RlmH family. As to quaternary structure, homodimer.

It is found in the cytoplasm. The enzyme catalyses pseudouridine(1915) in 23S rRNA + S-adenosyl-L-methionine = N(3)-methylpseudouridine(1915) in 23S rRNA + S-adenosyl-L-homocysteine + H(+). In terms of biological role, specifically methylates the pseudouridine at position 1915 (m3Psi1915) in 23S rRNA. This is Ribosomal RNA large subunit methyltransferase H from Coxiella burnetii (strain Dugway 5J108-111).